The following is a 312-amino-acid chain: Olfactory receptor 8G50 (312 aa).

Over 1–28 (MAYSNQSRVTEFIISGLTNKPELQLPLF) the chain is Extracellular. N5 is a glycosylation site (N-linked (GlcNAc...) asparagine). The chain crosses the membrane as a helical span at residues 29–49 (LLFLGIYLFTVLGNLGMIILI). Topologically, residues 50 to 56 (LLSSHLH) are cytoplasmic. A helical membrane pass occupies residues 57-77 (TPMYFFLSSLSFIDLCYSTII). Over 78–99 (TPKMLVNFVTTKNVISYQECMT) the chain is Extracellular. C97 and C189 are disulfide-bonded. A helical transmembrane segment spans residues 100–120 (QLYFFIAFVISECHMLAAMAY). Residues 121-143 (DRYVAICNPLLYNVTMSYQVCSW) are Cytoplasmic-facing. Residues 144-164 (MVGGVYGMGFIGAAIHTFCML) traverse the membrane as a helical segment. The Extracellular segment spans residues 165–204 (RVVFCKDNIINHYFCDLFPLMELACSSTYVNEVVLLSLSA). Residues 205 to 225 (FNIFIPTLTILGSYIFIIISI) traverse the membrane as a helical segment. At 226–244 (LRIKSTEGRFKAFSTCSSH) the chain is on the cytoplasmic side. A helical transmembrane segment spans residues 245-265 (FSAVSVFFGSLAFMYLQPFSV). The Extracellular portion of the chain corresponds to 266–274 (SSKDKGKVS). Residues 275 to 292 (SVFYTTIVPMLNPMIYSL) traverse the membrane as a helical segment. Over 293–312 (RNRDVKLALNKLFQKKKFHV) the chain is Cytoplasmic.

It belongs to the G-protein coupled receptor 1 family.

The protein localises to the cell membrane. Its function is as follows. Odorant receptor. The polypeptide is Olfactory receptor 8G50 (Mus musculus (Mouse)).